We begin with the raw amino-acid sequence, 924 residues long: DNA repair and recombination protein RDH54 (924 aa).

Positions 1-10 (MQIPKYENKP) are enriched in basic and acidic residues. Disordered regions lie at residues 1 to 21 (MQIPKYENKPFKPPRRVGSNK) and 155 to 183 (EALSQNMGNPSPPTTSTTETVPSTKNDGG). Low complexity predominate over residues 168–178 (TTSTTETVPST). In terms of domain architecture, Helicase ATP-binding spans 299-487 (LENDSDISGC…FTIIDFINPG (189 aa)). 346-353 (IPLTGLCK) contacts ATP. Positions 472–475 (NDLN) match the DEGH box motif. Residue K615 forms a Glycyl lysine isopeptide (Lys-Gly) (interchain with G-Cter in ubiquitin) linkage. In terms of domain architecture, Helicase C-terminal spans 631–790 (KLKVLMTLLE…DSEMRNKESS (160 aa)).

This sequence belongs to the SNF2/RAD54 helicase family. As to quaternary structure, interacts with RAD51 and DMC1.

It localises to the nucleus. The catalysed reaction is ATP + H2O = ADP + phosphate + H(+). Functionally, involved in the recombinational repair of double-strand breaks (DSB) in DNA during mitosis and meiosis. Has DNA dependent ATPase activity. Promotes D-loop (displacement loop) formation with RAD51 recombinase. Modifies the topology of double-stranded DNA during the D-loop reaction to facilitate the invasion of the homologous duplex molecule by the initiating single-stranded DNA substrate. Required for adaptation from G2/M checkpoint arrest induced by a double strand break, by participating in monitoring the extent of single-stranded DNA produced by resection of DNA ends. This role is distinct from its roles in recombination. Promotes colocalization of RAD51 and DMC1 during meiotic recombination. Involved in crossover interference. The sequence is that of DNA repair and recombination protein RDH54 (RDH54) from Saccharomyces cerevisiae (strain JAY291) (Baker's yeast).